We begin with the raw amino-acid sequence, 322 residues long: Formimidoylglutamase (322 aa).

Residues H130, D156, H158, D160, C245, and D247 each coordinate Mn(2+).

It belongs to the arginase family. It depends on Mn(2+) as a cofactor.

The catalysed reaction is N-formimidoyl-L-glutamate + H2O = formamide + L-glutamate. Its pathway is amino-acid degradation; L-histidine degradation into L-glutamate; L-glutamate from N-formimidoyl-L-glutamate (hydrolase route): step 1/1. Catalyzes the conversion of N-formimidoyl-L-glutamate to L-glutamate and formamide. This is Formimidoylglutamase from Lysinibacillus sphaericus (strain C3-41).